The following is a 277-amino-acid chain: 3-methyl-2-oxobutanoate hydroxymethyltransferase (277 aa).

Residues Asp53 and Asp96 each coordinate Mg(2+). Residues 53–54 (DS), Asp96, and Lys126 contribute to the 3-methyl-2-oxobutanoate site. Glu128 is a binding site for Mg(2+). Glu195 serves as the catalytic Proton acceptor.

Belongs to the PanB family. As to quaternary structure, homodecamer; pentamer of dimers. Mg(2+) serves as cofactor.

The protein resides in the cytoplasm. It carries out the reaction 3-methyl-2-oxobutanoate + (6R)-5,10-methylene-5,6,7,8-tetrahydrofolate + H2O = 2-dehydropantoate + (6S)-5,6,7,8-tetrahydrofolate. It functions in the pathway cofactor biosynthesis; (R)-pantothenate biosynthesis; (R)-pantoate from 3-methyl-2-oxobutanoate: step 1/2. Functionally, catalyzes the reversible reaction in which hydroxymethyl group from 5,10-methylenetetrahydrofolate is transferred onto alpha-ketoisovalerate to form ketopantoate. This chain is 3-methyl-2-oxobutanoate hydroxymethyltransferase, found in Chlorobium phaeobacteroides (strain DSM 266 / SMG 266 / 2430).